Here is a 261-residue protein sequence, read N- to C-terminus: Hemin import ATP-binding protein HmuV (261 aa).

In terms of domain architecture, ABC transporter spans leucine 5–aspartate 241. Glycine 37 to serine 44 lines the ATP pocket.

Belongs to the ABC transporter superfamily. Heme (hemin) importer (TC 3.A.1.14.5) family. As to quaternary structure, the complex is composed of two ATP-binding proteins (HmuV), two transmembrane proteins (HmuU) and a solute-binding protein (HmuT).

The protein resides in the cell inner membrane. Part of the ABC transporter complex HmuTUV involved in hemin import. Responsible for energy coupling to the transport system. This chain is Hemin import ATP-binding protein HmuV, found in Rhodopseudomonas palustris (strain BisB5).